The following is a 188-amino-acid chain: uncharacterized protein (188 aa).

The disordered stretch occupies residues 133-153 (PKGRPTMKLQYPKMPPKPKTR).

It belongs to the IS150/IS1296 orfA family.

This is an uncharacterized protein from Haemophilus influenzae (strain ATCC 51907 / DSM 11121 / KW20 / Rd).